Consider the following 238-residue polypeptide: Serine protease SplA (238 aa).

Positions 1–38 (MNKNVMVKGLTALTILTILTSLGFAENISNQPHSIAKA) are cleaved as a signal peptide. Active-site charge relay system residues include His-77, Asp-116, and Ser-192.

Belongs to the peptidase S1B family.

The protein localises to the secreted. This is Serine protease SplA (splA) from Staphylococcus aureus (strain COL).